We begin with the raw amino-acid sequence, 172 residues long: DNA-directed RNA polymerase II subunit RPB7 (172 aa).

It belongs to the eukaryotic RPB7/RPC8 RNA polymerase subunit family. As to quaternary structure, component of the RNA polymerase II (Pol II) core complex consisting of 12 subunits: a ten-subunit catalytic core composed of POLR2A/RPB1, POLR2B/RPB2, POLR2C/RPB3, POLR2I/RPB9, POLR2J/RPB11, POLR2E/RPABC1, POLR2F/RPABC2, POLR2H/RPABC3, POLR2K/RPABC4 and POLR2L/RPABC5 and a mobile stalk composed of two subunits POLR2D/RPB4 and POLR2G/RPB7, protruding from the core and functioning primarily in transcription initiation. Part of Pol II(G) complex, in which Pol II core associates with an additional subunit POLR2M; unlike conventional Pol II, Pol II(G) functions as a transcriptional repressor. Part of TBP-based Pol II pre-initiation complex (PIC), in which Pol II core assembles with general transcription factors and other specific initiation factors including GTF2E1, GTF2E2, GTF2F1, GTF2F2, TCEA1, ERCC2, ERCC3, GTF2H2, GTF2H3, GTF2H4, GTF2H5, GTF2A1, GTF2A2, GTF2B and TBP; this large multi-subunit PIC complex mediates DNA unwinding and targets Pol II core to the transcription start site where the first phosphodiester bond forms.

The protein localises to the nucleus. Core component of RNA polymerase II (Pol II), a DNA-dependent RNA polymerase which synthesizes mRNA precursors and many functional non-coding RNAs using the four ribonucleoside triphosphates as substrates. Pol II is the central component of the basal RNA polymerase II transcription machinery. It is composed of mobile elements that move relative to each other. POLR2G/RPB7 is part of a subcomplex with POLR2D/RPB4 that binds to a pocket formed by POLR2A/RPB1, POLR2B/RPB2 and POLR2F/RPABC2 at the base of the clamp element. The POLR2D/RPB4-POLR2G/RPB7 subcomplex seems to lock the clamp via POLR2G/RPB7 in the closed conformation thus preventing double-stranded DNA to enter the active site cleft. The POLR2D/RPB4-POLR2G/RPB7 subcomplex binds single-stranded DNA and RNA. In Bos taurus (Bovine), this protein is DNA-directed RNA polymerase II subunit RPB7 (POLR2G).